The sequence spans 389 residues: S-adenosylmethionine synthase (389 aa).

His-15 is a binding site for ATP. Residue Asp-17 coordinates Mg(2+). Residue Glu-43 coordinates K(+). Glu-56 and Gln-99 together coordinate L-methionine. The interval 99–109 (QSPDIAQGVNE) is flexible loop. ATP contacts are provided by residues 166–168 (DAK), 234–235 (RF), Asp-243, 249–250 (RK), Ala-266, and Lys-270. Asp-243 is an L-methionine binding site. Lys-274 contacts L-methionine.

The protein belongs to the AdoMet synthase family. Homotetramer; dimer of dimers. It depends on Mg(2+) as a cofactor. K(+) serves as cofactor.

It is found in the cytoplasm. It catalyses the reaction L-methionine + ATP + H2O = S-adenosyl-L-methionine + phosphate + diphosphate. Its pathway is amino-acid biosynthesis; S-adenosyl-L-methionine biosynthesis; S-adenosyl-L-methionine from L-methionine: step 1/1. Functionally, catalyzes the formation of S-adenosylmethionine (AdoMet) from methionine and ATP. The overall synthetic reaction is composed of two sequential steps, AdoMet formation and the subsequent tripolyphosphate hydrolysis which occurs prior to release of AdoMet from the enzyme. This Neisseria meningitidis serogroup A / serotype 4A (strain DSM 15465 / Z2491) protein is S-adenosylmethionine synthase.